A 428-amino-acid chain; its full sequence is Serine--tRNA ligase (428 aa).

Position 235–237 (235–237) interacts with L-serine; it reads TAE. ATP is bound at residue 266–268; the sequence is RSE. Position 289 (E289) interacts with L-serine. 353-356 lines the ATP pocket; sequence EISS. S389 is a binding site for L-serine.

The protein belongs to the class-II aminoacyl-tRNA synthetase family. Type-1 seryl-tRNA synthetase subfamily. As to quaternary structure, homodimer. The tRNA molecule binds across the dimer.

It localises to the cytoplasm. It catalyses the reaction tRNA(Ser) + L-serine + ATP = L-seryl-tRNA(Ser) + AMP + diphosphate + H(+). The catalysed reaction is tRNA(Sec) + L-serine + ATP = L-seryl-tRNA(Sec) + AMP + diphosphate + H(+). The protein operates within aminoacyl-tRNA biosynthesis; selenocysteinyl-tRNA(Sec) biosynthesis; L-seryl-tRNA(Sec) from L-serine and tRNA(Sec): step 1/1. In terms of biological role, catalyzes the attachment of serine to tRNA(Ser). Is also able to aminoacylate tRNA(Sec) with serine, to form the misacylated tRNA L-seryl-tRNA(Sec), which will be further converted into selenocysteinyl-tRNA(Sec). The sequence is that of Serine--tRNA ligase from Shewanella loihica (strain ATCC BAA-1088 / PV-4).